The chain runs to 48 residues: U-actitoxin-Cgg3 (48 aa).

3 disulfide bridges follow: Cys-5–Cys-41, Cys-7–Cys-33, and Cys-23–Cys-42. Residue Ser-46 is modified to Serine amide. Residues Gly-47–Arg-48 constitute a propeptide, removed in mature form.

Belongs to the sea anemone type 3 (BDS) potassium channel toxin family.

It is found in the secreted. In terms of biological role, neurotoxin that induces paralysis when injected into crabs. May function in antimicrobial activity as it displays inhibitory activity towards the B.licheniformis enzyme subtilisin A (SUBTA) and the recombinant S.maltophilia protease 1 (rStmPr1) enzyme. Also displays inhibitory activity against various proteases including the porcine pancreatic elastase (PPE) and proteinase K (PK). The chain is U-actitoxin-Cgg3 from Condylactis gigantea (Giant Caribbean anemone).